The primary structure comprises 1058 residues: MIKEITAKYDAEQIEKKVTQFWEDSDAYRKTREHRKSGKRLFFVDGPPYTTGHIHLGTAWNKIIKDSILRYYSMNNRYILERPGWDMHGLPIEVKVEGVLGFKSKKDIESFGVENFIEKCKEFAIKQKQAMTEQFQRLGVWLQWPDPYMTLKDEYIEAAWWTLKQASEKDLLEVGKRSVNWCPRCETAIADSEVEYSERTDPSIYVKFRVKGEENTFIVIWTTTPWTIPANVAVAVHPAYEYSKFRAIRQDGSEEILIAATELIKNVLKQGRYTDFEVLETMLGEELTKLEYESPVGDLVPVQNEIKHGVYLADFVTVENTGCVHIAPGHGMDDFNLGAKHKLPILCPVGSNGSYTEEAGEYAGKNVKEANPIVIEDLKARNRLLAEGTVTHRYGHCWRCKTPIIYLATEQWFLKVTEIKEKMLEEIDAVDWYPDWAGSARFRTWVEGARDWCISRQRYWGIPIPVWKCKKCGKLEVIGTKAELLEKAGLNGDIELHRPYVDRVTVPCECGGEKKRVEDVFDVWFDSAVASWATLKFPQTRDQFDEWWPADFITEGHDQTRGWFYSQLGASMVGFGRAPYKSVLMHGFTLDAGGKKMSKSLGNVISPLDIIGRFGADTLRAYVLSSSAPWDDLKFNLEEVETIHRSINILWNVFRFPLPYMALDNFDPMQVSLDSVRDALREEDRWILSRAQSVVKSVDEAMSGYLLHKAVREILDFTLEDLSRWYIQLIRPRTWTEADDPDKLAAYCVLYEVYVTITKLISPFMPYLAEEMYQNLIRNVDPKAPESVHMCDWPKVNEAYLDTKLEEAMNTARSIVEAASNARQKAGRKLRWPISRIVVSPESEDAARAVERLRSVLMDQTNSKDIVLTGVGKSWDELGLEVIPDPGKIGPVFKRDAGKVVPALQKVDGFALKKAFAEAGEFELTLADGSTVKVTPEMANFKETLPEGTASAESDAGPVYVDANLTPELEAEGYAREVIRRLQDMRKELDLVVDENIQVSVRIEDERVLKLVETLKGLIAEEVRADVFDIGSGVNVSGDLVKDWDVEGIAMKMGIAKK.

A 'HIGH' region motif is present at residues 48–58 (PYTTGHIHLGT). A 'KMSKS' region motif is present at residues 596-600 (KMSKS). K599 is an ATP binding site.

The protein belongs to the class-I aminoacyl-tRNA synthetase family. IleS type 2 subfamily. In terms of assembly, monomer. It depends on Zn(2+) as a cofactor.

The protein localises to the cytoplasm. The catalysed reaction is tRNA(Ile) + L-isoleucine + ATP = L-isoleucyl-tRNA(Ile) + AMP + diphosphate. Functionally, catalyzes the attachment of isoleucine to tRNA(Ile). As IleRS can inadvertently accommodate and process structurally similar amino acids such as valine, to avoid such errors it has two additional distinct tRNA(Ile)-dependent editing activities. One activity is designated as 'pretransfer' editing and involves the hydrolysis of activated Val-AMP. The other activity is designated 'posttransfer' editing and involves deacylation of mischarged Val-tRNA(Ile). In Methanosarcina mazei (strain ATCC BAA-159 / DSM 3647 / Goe1 / Go1 / JCM 11833 / OCM 88) (Methanosarcina frisia), this protein is Isoleucine--tRNA ligase.